A 922-amino-acid chain; its full sequence is Probable outer membrane protein pmp1 (922 aa).

Positions 1–26 (MRFSLCGFPLVFSFTLLSVFDTSLSA) are cleaved as a signal peptide. The 303-residue stretch at 620 to 922 (SLQTDRGLWI…NINCGSKFRF (303 aa)) folds into the Autotransporter domain.

The protein belongs to the PMP outer membrane protein family.

It is found in the secreted. Its subcellular location is the cell wall. The protein resides in the cell outer membrane. This Chlamydia pneumoniae (Chlamydophila pneumoniae) protein is Probable outer membrane protein pmp1 (pmp1).